We begin with the raw amino-acid sequence, 211 residues long: MSGTLVLVRHGQSDWNLKNLFTGWKDPDLTALGVEEAKTGGKALADYGIKYDIAFTSVLTRAQHTLKIILDEVGQPGLETIKDQALNERDYGDLSGLNKDDARAKWGEEQVHIWRRSYDVPPPGGESLRDTGARVWPYYLTEILPRVLAGQKVLVAAHGNSLRSLVMVLDRLTKEQILALNLATGVPMVYKLNADSTVASKEVLGDMSGAH.

Substrate contacts are provided by residues 9 to 16, 22 to 23, Arg61, 88 to 91, Lys99, 115 to 116, and 159 to 160; these read RHGQSDWN, TG, ERDY, RR, and GN. The active-site Tele-phosphohistidine intermediate is the His10. Glu88 (proton donor/acceptor) is an active-site residue.

It belongs to the phosphoglycerate mutase family. BPG-dependent PGAM subfamily. As to quaternary structure, homodimer.

The catalysed reaction is (2R)-2-phosphoglycerate = (2R)-3-phosphoglycerate. Its pathway is carbohydrate degradation; glycolysis; pyruvate from D-glyceraldehyde 3-phosphate: step 3/5. Its function is as follows. Catalyzes the interconversion of 2-phosphoglycerate and 3-phosphoglycerate. The protein is 2,3-bisphosphoglycerate-dependent phosphoglycerate mutase of Rhizobium rhizogenes (strain K84 / ATCC BAA-868) (Agrobacterium radiobacter).